The chain runs to 410 residues: Mating-type locus allele B3 protein (410 aa).

The variable domain between B alleles stretch occupies residues 1–110 (MSRDPKLSLS…ANVVSPGEGC (110 aa)). The segment at residues 107–184 (GEGCRNLSED…NARRRSGWSH (78 aa)) is a DNA-binding region (homeobox; TALE-type). The segment at 111-410 (RNLSEDLPAY…PFLCLSVAFV (300 aa)) is highly conserved between B alleles. Disordered regions lie at residues 203-224 (AKLS…PSDD) and 278-335 (TPKP…TPEL). The segment covering 205-219 (LSSSNQSTPPSLTSE) has biased composition (polar residues). The Nuclear localization signal signature appears at 276–308 (KKTPKPGMPRPVTTVAKRHPARKTKPAAKPKSR). Over residues 291-307 (AKRHPARKTKPAAKPKS) the composition is skewed to basic residues. Residues 312 to 335 (PRASTTPSIDSTLDSSKLESTPEL) show a composition bias toward polar residues. The interval 333-410 (PELSMCSTAD…PFLCLSVAFV (78 aa)) is not essential for B3 function.

The protein belongs to the TALE/M-ATYP homeobox family.

Its subcellular location is the nucleus. Functionally, the B locus has at least 25 alleles, and any combination of two different B alleles yields a multimeric regulatory protein, that activates genes responsible for the pathogenicity and for the sexual development of the fungus within the corn plant. The protein is Mating-type locus allele B3 protein of Mycosarcoma maydis (Corn smut fungus).